Reading from the N-terminus, the 402-residue chain is Tryptophan synthase beta chain (402 aa).

Lys-91 carries the post-translational modification N6-(pyridoxal phosphate)lysine.

It belongs to the TrpB family. In terms of assembly, tetramer of two alpha and two beta chains. The cofactor is pyridoxal 5'-phosphate.

It carries out the reaction (1S,2R)-1-C-(indol-3-yl)glycerol 3-phosphate + L-serine = D-glyceraldehyde 3-phosphate + L-tryptophan + H2O. It functions in the pathway amino-acid biosynthesis; L-tryptophan biosynthesis; L-tryptophan from chorismate: step 5/5. The beta subunit is responsible for the synthesis of L-tryptophan from indole and L-serine. The protein is Tryptophan synthase beta chain of Streptococcus thermophilus (strain CNRZ 1066).